The chain runs to 126 residues: Small ribosomal subunit protein uS8 (126 aa).

This sequence belongs to the universal ribosomal protein uS8 family. Part of the 30S ribosomal subunit. Contacts proteins S5 and S12.

One of the primary rRNA binding proteins, it binds directly to 16S rRNA central domain where it helps coordinate assembly of the platform of the 30S subunit. The sequence is that of Small ribosomal subunit protein uS8 from Lawsonia intracellularis (strain PHE/MN1-00).